Reading from the N-terminus, the 420-residue chain is MDKFRVQGPTRLAGEVTISGAKNAALPILFAALLAEEPVEIQNVPKLRDIDTTMKLLGQLGARVERNGSVHVDASNVNVFCAPYDLVKTMRASIWALGPLVARFGQGQVSLPGGCAIGARPVDLHIYGLEQLGAQIVLEEGYVKATVDGRLKGAHIVMDKVSVGATVTIMSAATLAEGTTIIENAAREPEIVDTANFLNTLGAKISGAGSDKITIEGVARLGGGVYRVVPDRIETGTFLVAAAVSRGQIICRNTRPDTLDAVLAKLREAGAEIEIGEDWISLDMHGKRPKAVTVRTSPHPGFPTDMQAQFSLLNLVAEGTGVITETIFENRFMHVPELIRMGAQAEIESNTVICHGVDKLSGAQVMATDLRASASLVLAGCIAEGVTIVDRIYHIDRGYDRIEDKLRALGANIERVKEHE.

22 to 23 (KN) is a binding site for phosphoenolpyruvate. Arg91 lines the UDP-N-acetyl-alpha-D-glucosamine pocket. Residue Cys115 is the Proton donor of the active site. A 2-(S-cysteinyl)pyruvic acid O-phosphothioketal modification is found at Cys115. Residues 120 to 124 (RPVDL), 160 to 163 (KVSV), Asp305, and Ile327 contribute to the UDP-N-acetyl-alpha-D-glucosamine site.

It belongs to the EPSP synthase family. MurA subfamily.

The protein resides in the cytoplasm. It catalyses the reaction phosphoenolpyruvate + UDP-N-acetyl-alpha-D-glucosamine = UDP-N-acetyl-3-O-(1-carboxyvinyl)-alpha-D-glucosamine + phosphate. Its pathway is cell wall biogenesis; peptidoglycan biosynthesis. Its function is as follows. Cell wall formation. Adds enolpyruvyl to UDP-N-acetylglucosamine. In Pectobacterium carotovorum subsp. carotovorum (strain PC1), this protein is UDP-N-acetylglucosamine 1-carboxyvinyltransferase.